We begin with the raw amino-acid sequence, 200 residues long: Small ribosomal subunit protein uS4 (200 aa).

In terms of domain architecture, S4 RNA-binding spans 92-155 (SRLDNLVYRM…RNLTVVKEAL (64 aa)).

It belongs to the universal ribosomal protein uS4 family. In terms of assembly, part of the 30S ribosomal subunit. Contacts protein S5. The interaction surface between S4 and S5 is involved in control of translational fidelity.

One of the primary rRNA binding proteins, it binds directly to 16S rRNA where it nucleates assembly of the body of the 30S subunit. In terms of biological role, with S5 and S12 plays an important role in translational accuracy. The sequence is that of Small ribosomal subunit protein uS4 from Shouchella clausii (strain KSM-K16) (Alkalihalobacillus clausii).